The following is a 465-amino-acid chain: D-ornithine/D-lysine decarboxylase (465 aa).

Lys80 is subject to N6-(pyridoxal phosphate)lysine. Pyridoxal 5'-phosphate-binding positions include Gly259 and 307–310 (EPGR). Cys387 functions as the Proton donor in the catalytic mechanism. Tyr422 provides a ligand contact to pyridoxal 5'-phosphate.

The protein belongs to the Orn/Lys/Arg decarboxylase class-II family. As to quaternary structure, homodimer. It depends on pyridoxal 5'-phosphate as a cofactor.

The catalysed reaction is D-ornithine + H(+) = putrescine + CO2. It catalyses the reaction D-lysine + H(+) = cadaverine + CO2. Catalyzes the decarboxylation of D-ornithine and D-lysine. Ornithine is likely the physiological substrate. Has no detectable diaminopimelate decarboxylase activity in vitro. The sequence is that of D-ornithine/D-lysine decarboxylase from Salmonella typhimurium (strain LT2 / SGSC1412 / ATCC 700720).